A 186-amino-acid chain; its full sequence is Glutathione peroxidase 7 (186 aa).

The N-terminal stretch at 1-18 (MVAARAAAWLLLAAAACA) is a signal peptide. The active site involves C56.

This sequence belongs to the glutathione peroxidase family.

Its subcellular location is the secreted. It carries out the reaction 2 glutathione + H2O2 = glutathione disulfide + 2 H2O. The sequence is that of Glutathione peroxidase 7 (GPX7) from Bos taurus (Bovine).